The chain runs to 757 residues: 5-methyltetrahydropteroyltriglutamate--homocysteine methyltransferase (757 aa).

5-methyltetrahydropteroyltri-L-glutamate-binding positions include 16 to 19 and Lys-112; that span reads RELK. L-homocysteine-binding positions include 432–434 and Glu-485; that span reads IGS. Residues 432-434 and Glu-485 contribute to the L-methionine site; that span reads IGS. Residues 516–517 and Trp-562 each bind 5-methyltetrahydropteroyltri-L-glutamate; that span reads RC. Asp-600 serves as a coordination point for L-homocysteine. Position 600 (Asp-600) interacts with L-methionine. A 5-methyltetrahydropteroyltri-L-glutamate-binding site is contributed by Glu-606. 3 residues coordinate Zn(2+): His-642, Cys-644, and Glu-666. His-695 acts as the Proton donor in catalysis. Zn(2+) is bound at residue Cys-727.

The protein belongs to the vitamin-B12 independent methionine synthase family. Zn(2+) is required as a cofactor.

The catalysed reaction is 5-methyltetrahydropteroyltri-L-glutamate + L-homocysteine = tetrahydropteroyltri-L-glutamate + L-methionine. It participates in amino-acid biosynthesis; L-methionine biosynthesis via de novo pathway; L-methionine from L-homocysteine (MetE route): step 1/1. Functionally, catalyzes the transfer of a methyl group from 5-methyltetrahydrofolate to homocysteine resulting in methionine formation. The chain is 5-methyltetrahydropteroyltriglutamate--homocysteine methyltransferase from Actinobacillus pleuropneumoniae serotype 5b (strain L20).